The chain runs to 274 residues: 2,3,4,5-tetrahydropyridine-2,6-dicarboxylate N-succinyltransferase (274 aa).

Substrate is bound by residues arginine 104 and aspartate 141.

It belongs to the transferase hexapeptide repeat family. In terms of assembly, homotrimer.

The protein localises to the cytoplasm. The catalysed reaction is (S)-2,3,4,5-tetrahydrodipicolinate + succinyl-CoA + H2O = (S)-2-succinylamino-6-oxoheptanedioate + CoA. The protein operates within amino-acid biosynthesis; L-lysine biosynthesis via DAP pathway; LL-2,6-diaminopimelate from (S)-tetrahydrodipicolinate (succinylase route): step 1/3. The polypeptide is 2,3,4,5-tetrahydropyridine-2,6-dicarboxylate N-succinyltransferase (Shewanella halifaxensis (strain HAW-EB4)).